The sequence spans 78 residues: MPVTKSYFMTVVVVLILVDETTGGLFGFRSSKRQEPWIACELYQGLCRNACQKYEIQYLSCPKTRKCCLKYPRKITSF.

A signal peptide spans Met-1 to Gly-23. Disulfide bonds link Cys-40/Cys-67, Cys-47/Cys-61, and Cys-51/Cys-68.

It belongs to the beta-defensin family. As to expression, highly expressed in the cauda epididymis.

The protein resides in the secreted. Its function is as follows. Has antibacterial activity. The polypeptide is Beta-defensin 29 (Defb29) (Mus musculus (Mouse)).